Consider the following 481-residue polypeptide: Beta-1,3-glucan-binding protein (481 aa).

An N-terminal signal peptide occupies residues 1–18 (RCARVCAVLFLFIQISYG). Residues 20–120 (YQVPQVTVQA…LSFTVSALED (101 aa)) form the CBM39 domain. N-linked (GlcNAc...) asparagine glycosylation is present at N110. In terms of domain architecture, GH16 spans 124–481 (TGTGTDPVPT…LVDYVKVVAL (358 aa)).

It belongs to the insect beta-1,3-glucan binding protein family.

It localises to the secreted. Its function is as follows. Involved in the recognition of invading microorganisms. Binds specifically to beta-1,3-glucan and activates the phenoloxidase cascade. The polypeptide is Beta-1,3-glucan-binding protein (Hyphantria cunea (Fall webworm moth)).